The following is a 315-amino-acid chain: Malate dehydrogenase (315 aa).

NAD(+) is bound by residues 10–15 (GSGFTG) and Asp34. Substrate is bound by residues Arg85 and Arg91. NAD(+) is bound by residues Asn98 and 121 to 123 (LTN). Positions 123 and 154 each coordinate substrate. Catalysis depends on His178, which acts as the Proton acceptor.

It belongs to the LDH/MDH superfamily. MDH type 3 family.

The catalysed reaction is (S)-malate + NAD(+) = oxaloacetate + NADH + H(+). Its function is as follows. Catalyzes the reversible oxidation of malate to oxaloacetate. This Symbiobacterium thermophilum (strain DSM 24528 / JCM 14929 / IAM 14863 / T) protein is Malate dehydrogenase.